Reading from the N-terminus, the 392-residue chain is 8-amino-7-oxononanoate synthase (392 aa).

Residue Arg21 participates in substrate binding. 108 to 109 (GF) serves as a coordination point for pyridoxal 5'-phosphate. His133 is a binding site for substrate. Pyridoxal 5'-phosphate is bound by residues Ser181, 206-209 (DDAH), and 237-240 (TLSK). Lys240 is modified (N6-(pyridoxal phosphate)lysine). Residue Thr354 coordinates substrate.

It belongs to the class-II pyridoxal-phosphate-dependent aminotransferase family. BioF subfamily. In terms of assembly, homodimer. Pyridoxal 5'-phosphate is required as a cofactor.

The enzyme catalyses 6-carboxyhexanoyl-[ACP] + L-alanine + H(+) = (8S)-8-amino-7-oxononanoate + holo-[ACP] + CO2. It functions in the pathway cofactor biosynthesis; biotin biosynthesis. Functionally, catalyzes the decarboxylative condensation of pimeloyl-[acyl-carrier protein] and L-alanine to produce 8-amino-7-oxononanoate (AON), [acyl-carrier protein], and carbon dioxide. The chain is 8-amino-7-oxononanoate synthase from Symbiobacterium thermophilum (strain DSM 24528 / JCM 14929 / IAM 14863 / T).